The sequence spans 697 residues: Envelope glycoprotein G (697 aa).

Positions 1–22 (MHAIAPRLLLLFVLSGLPGTRG) are cleaved as a signal peptide. The Virion surface portion of the chain corresponds to 23–648 (GSGVPGPINP…WFLTASPALD (626 aa)). N-linked (GlcNAc...) asparagine; by host glycans are attached at residues Asn-104 and Asn-163. Disordered stretches follow at residues 298-389 (HWAP…TTPP) and 402-630 (TPEE…PSGP). Residues 322-335 (LRTDPEGVDPDVRA) show a composition bias toward basic and acidic residues. Composition is skewed to low complexity over residues 375-389 (DPSA…TTPP) and 402-445 (TPEE…AKTP). Asn-435 carries N-linked (GlcNAc...) asparagine; by host glycosylation. 2 stretches are compositionally biased toward pro residues: residues 446–457 (PTTPAPTTPPPT) and 465–480 (PTTP…PATP). Low complexity predominate over residues 481–529 (GPVGASAAPTADSPLTALPPATAPGPSAANVSVAATTATPGTRGTARTP). The N-linked (GlcNAc...) asparagine; by host glycan is linked to Asn-510. Residues 542 to 552 (DAPPGSPAPPP) are compositionally biased toward pro residues. Over residues 560 to 576 (EEFEGAGDGEPPEDDDS) the composition is skewed to acidic residues. The span at 587 to 603 (PNKPPPARPGPIRPTLP) shows a compositional bias: pro residues. A helical membrane pass occupies residues 649 to 669 (ILFIISTTIHTAAFVCLVALA). Topologically, residues 670 to 697 (AQLWRGRAGRRRYAHPSVRYVCLPPERD) are intravirion.

The protein belongs to the alphaherpesvirinae glycoprotein G family.

It localises to the virion membrane. Functionally, chemokine-binding protein that inhibits neutrophils' chemotaxis. The chain is Envelope glycoprotein G (gG) from Homo sapiens (Human).